Here is a 721-residue protein sequence, read N- to C-terminus: Centlein (721 aa).

The stretch at 52-164 forms a coiled coil; it reads KNEKAISEQT…LRDENEEVVN (113 aa). 2 disordered regions span residues 156–180 and 259–288; these read RDEN…KSEM and ETSQ…QQEV. Composition is skewed to basic and acidic residues over residues 165 to 178 and 267 to 284; these read PEEK…KAKS and IEND…DSRA. Coiled-coil stretches lie at residues 345 to 515 and 573 to 626; these read LLRE…EDLK and QSEQ…TQKS. The residue at position 658 (Thr658) is a Phosphothreonine.

Interacts with CEP250 and CEP68. Interacts with NEK2; the interaction leads to phosphorylation of CNTLN. In terms of processing, phosphorylated directly or indirectly by NEK2.

The protein resides in the cytoplasm. It localises to the cytoskeleton. Its subcellular location is the microtubule organizing center. The protein localises to the centrosome. It is found in the centriole. Required for centrosome cohesion and recruitment of CEP68 to centrosomes. In Rattus norvegicus (Rat), this protein is Centlein.